The chain runs to 444 residues: Ribulose bisphosphate carboxylase (444 aa).

K163 acts as the Proton acceptor in catalysis. Residue K165 participates in substrate binding. 3 residues coordinate Mg(2+): K189, D191, and E192. K189 is modified (N6-carboxylysine). Catalysis depends on H281, which acts as the Proton acceptor. Residues R282, H314, 367-369, and 389-392 contribute to the substrate site; these read SGG and QLGG.

This sequence belongs to the RuBisCO large chain family. Type III subfamily. As to quaternary structure, homodimer or homodecamer. In contrast to form I RuBisCO, the form III RuBisCO is composed solely of large subunits. Requires Mg(2+) as cofactor.

It carries out the reaction 2 (2R)-3-phosphoglycerate + 2 H(+) = D-ribulose 1,5-bisphosphate + CO2 + H2O. The catalysed reaction is D-ribulose 1,5-bisphosphate + O2 = 2-phosphoglycolate + (2R)-3-phosphoglycerate + 2 H(+). Functionally, catalyzes the addition of molecular CO(2) and H(2)O to ribulose 1,5-bisphosphate (RuBP), generating two molecules of 3-phosphoglycerate (3-PGA). Functions in an archaeal AMP degradation pathway, together with AMP phosphorylase and R15P isomerase. This Thermococcus onnurineus (strain NA1) protein is Ribulose bisphosphate carboxylase.